The sequence spans 300 residues: Iron-dependent extradiol dioxygenase (300 aa).

2 consecutive VOC domains span residues 5 to 120 (SLAY…AFHG) and 142 to 270 (GLGH…FGCE). Histidine 145 is a Fe cation binding site. Positions 200, 215, 250, and 256 each coordinate substrate. Histidine 215 serves as a coordination point for Fe cation. Glutamate 266 serves as a coordination point for Fe cation.

It belongs to the extradiol ring-cleavage dioxygenase family. In terms of assembly, homodimer. Fe(2+) is required as a cofactor.

It catalyses the reaction 3,4-dihydroxy-9,10-secoandrosta-1,3,5(10)-triene-9,17-dione + O2 = (1E,2Z)-3-hydroxy-5,9,17-trioxo-4,5:9,10-disecoandrosta-1(10),2-dien-4-oate + H(+). It participates in steroid metabolism; cholesterol metabolism. Its function is as follows. Catalyzes the meta-cleavage of 3,4-dihydroxy-9,10-seconandrost-1,3,5(10)-triene-9,17-dione (3,4-DHSA) to produce 4,5-9,10-diseco-3-hydroxy-5,9,17-trioxoandrosta-1(10),2-diene-4-oic acid (4,9-DSHA). Also involved in biphenyl and polychlorinated biphenyls (PCBs) degradation. This Rhodococcus jostii (strain RHA1) protein is Iron-dependent extradiol dioxygenase (hsaC).